Reading from the N-terminus, the 290-residue chain is Nucleoid occlusion protein (290 aa).

The H-T-H motif DNA-binding region spans 153–172; the sequence is EALAQRLGKGQSTIANKLRL.

The protein belongs to the ParB family.

The protein resides in the cytoplasm. The protein localises to the nucleoid. Its function is as follows. Effects nucleoid occlusion by binding relatively nonspecifically to DNA and preventing the assembly of the division machinery in the vicinity of the nucleoid, especially under conditions that disturb the cell cycle. It helps to coordinate cell division and chromosome segregation by preventing the formation of the Z ring through the nucleoid, which would cause chromosome breakage. In Bacillus cereus (strain AH187), this protein is Nucleoid occlusion protein.